The following is a 424-amino-acid chain: Tyrosine--tRNA ligase 1 (424 aa).

Position 37 (tyrosine 37) interacts with L-tyrosine. The short motif at 42-51 (PTADSLHLGH) is the 'HIGH' region element. L-tyrosine-binding residues include tyrosine 175 and glutamine 179. Residues 235–239 (KFGKT) carry the 'KMSKS' region motif. Lysine 238 lines the ATP pocket. Residues 357–414 (ADLQQALVNAGLVPSRGQARTMISSNAVAINGEKQSEPEYLFTDSNRLFDRYTLLRRG) enclose the S4 RNA-binding domain.

This sequence belongs to the class-I aminoacyl-tRNA synthetase family. TyrS type 1 subfamily. As to quaternary structure, homodimer.

It localises to the cytoplasm. It catalyses the reaction tRNA(Tyr) + L-tyrosine + ATP = L-tyrosyl-tRNA(Tyr) + AMP + diphosphate + H(+). Functionally, catalyzes the attachment of tyrosine to tRNA(Tyr) in a two-step reaction: tyrosine is first activated by ATP to form Tyr-AMP and then transferred to the acceptor end of tRNA(Tyr). The chain is Tyrosine--tRNA ligase 1 from Photorhabdus laumondii subsp. laumondii (strain DSM 15139 / CIP 105565 / TT01) (Photorhabdus luminescens subsp. laumondii).